Consider the following 348-residue polypeptide: MFGFGHHGHHGQDQPPQHHGGGGGGAHQPTFKIFCRADEGYCVAVREGNVVLAPTNPRDEHQHWYKDMRFSAKIKDEEGNPAFALVNKATGLAIKHSLGQGHPVKLAPFNPEYPDESVLWTESGDVGKSFRCIRMLNNIRLNFDAFHGDKDHGGVHDGTTIVLWEWAKGDNQCWKILPWGDEAYAGGSANAPRGGNEPTVRIFCKADEGFSVTVRGGSVCLAPTNPRDEYQHWIKDMRHSNSIKDEEGYPAFALVNRVTGEAIKHSQGEGHPVKLVPYNPGYQDESVLWTESRDVGHGFRCIRMVNNIYLNFDALHGDKDHGGVRDGTTVALWKWCEGDNQRWKIVPW.

The disordered stretch occupies residues 1–26; sequence MFGFGHHGHHGQDQPPQHHGGGGGGA. Positions 199 to 345 constitute a Ricin B-type lectin domain; that stretch reads TVRIFCKADE…CEGDNQRWKI (147 aa).

As to expression, expressed in roots and shoots.

Its function is as follows. Lectin which binds carbohydrates in vitro. Interacts through its lectin domain with glycan structures containing specific motifs. This is Ricin B-like lectin R40C1 from Oryza sativa subsp. japonica (Rice).